A 231-amino-acid chain; its full sequence is MSAQKLYASHVPLAPLSRMLLGIGSAVTAISDPKRGDMVAAMGETTAIGPVLENIRKRMESDVVGKRLLLEKPRISNGTIDRKWLRQLPDGTLGKLYSNFLDRLNTSPDARPTVKYIDNLEHLYVMQRYRETHDFTHIALEQKTNMLGEVTVKYFEGIQYGLPMCVTGGIFGGARLLTKNRQELVDRNLPWVVEQATNARFFMAFDWENHFEKQLSEVQKELNITPLSVNM.

Zn(2+) is bound by residues His-133, Asp-134, His-137, and Glu-149.

It belongs to the COQ4 family. In terms of assembly, component of a multi-subunit COQ enzyme complex. It depends on Zn(2+) as a cofactor.

Its subcellular location is the mitochondrion inner membrane. It catalyses the reaction a 4-hydroxy-3-methoxy-5-(all-trans-polyprenyl)benzoate + H(+) = a 2-methoxy-6-(all-trans-polyprenyl)phenol + CO2. It participates in cofactor biosynthesis; ubiquinone biosynthesis. Its function is as follows. Lyase that catalyzes the C1-decarboxylation of 4-hydroxy-3-methoxy-5-(all-trans-polyprenyl)benzoic acid into 2-methoxy-6-(all-trans-polyprenyl)phenol during ubiquinone biosynthesis. This Caenorhabditis elegans protein is Ubiquinone biosynthesis protein coq-4, mitochondrial.